The chain runs to 156 residues: Aspartate 1-decarboxylase (156 aa).

S29 (schiff-base intermediate with substrate; via pyruvic acid) is an active-site residue. S29 is subject to Pyruvic acid (Ser). Position 61 (T61) interacts with substrate. The active-site Proton donor is the Y62. Residue 77–79 (GAA) coordinates substrate.

Belongs to the PanD family. As to quaternary structure, heterooctamer of four alpha and four beta subunits. It depends on pyruvate as a cofactor. Post-translationally, is synthesized initially as an inactive proenzyme, which is activated by self-cleavage at a specific serine bond to produce a beta-subunit with a hydroxyl group at its C-terminus and an alpha-subunit with a pyruvoyl group at its N-terminus.

The protein localises to the cytoplasm. It catalyses the reaction L-aspartate + H(+) = beta-alanine + CO2. The protein operates within cofactor biosynthesis; (R)-pantothenate biosynthesis; beta-alanine from L-aspartate: step 1/1. In terms of biological role, catalyzes the pyruvoyl-dependent decarboxylation of aspartate to produce beta-alanine. The sequence is that of Aspartate 1-decarboxylase from Rhodopirellula baltica (strain DSM 10527 / NCIMB 13988 / SH1).